We begin with the raw amino-acid sequence, 326 residues long: MELTDLLLVAILLLTARLTLSSPVPPACDPRLLNKLLRDSYLLHSRLSQCPDVNPLSIPVLLPAVDFSLGEWKTQTEQSKAQDILGAVSLLLEGVMAARGQLEPSCLSSLLGQLSGQVRLLLGALQGLLGTQLPPQGRTTAHKDPSALFLSLQQLLRGKVRFLLLVEGPALCVRRTLPTTAVPSRTSQLLTLNKFPNRTSGLLETNFSVVARTAGPGLLNRLQGFRAKIIPGQLNQTSGSLDQIPGYLNGTHEPVNGTHGLFAGTSLQTLEAPDVVPGAFNKGSLPLNLQSGLPPIPSLAADGYTLFPPSPTFPTPGSPPQLPPVS.

The N-terminal stretch at 1–21 is a signal peptide; the sequence is MELTDLLLVAILLLTARLTLS. Cystine bridges form between Cys28/Cys172 and Cys50/Cys106. Asn197, Asn206, Asn235, Asn249, and Asn256 each carry an N-linked (GlcNAc...) asparagine glycan. A disordered region spans residues 307 to 326; the sequence is FPPSPTFPTPGSPPQLPPVS. Residues 308 to 326 show a composition bias toward pro residues; sequence PPSPTFPTPGSPPQLPPVS.

The protein belongs to the EPO/TPO family.

It is found in the secreted. Lineage-specific cytokine affecting the proliferation and maturation of megakaryocytes from their committed progenitor cells. It acts at a late stage of megakaryocyte development. It may be the major physiological regulator of circulating platelets. This is Thrombopoietin (Thpo) from Rattus norvegicus (Rat).